Here is a 635-residue protein sequence, read N- to C-terminus: CCR4-NOT transcription complex subunit 10 (635 aa).

Thr-45 carries the post-translational modification Phosphothreonine. Positions 131-165 form a coiled coil; that stretch reads LVARLEALEKAMAALVATLQLQLLLATNQLNRAEA. 2 disordered regions span residues 396–416 and 450–474; these read EERQ…QSAG and SEDV…DNNF. Residues 456–470 are compositionally biased toward basic and acidic residues; the sequence is PEPKDPTQESWRHPQ.

This sequence belongs to the CNOT10 family. As to quaternary structure, component of the CCR4-NOT complex. CNOT10 and CNOT11 form a subcomplex docked to the CNOT1 scaffold.

The protein resides in the cytoplasm. Its subcellular location is the nucleus. Component of the CCR4-NOT complex which is one of the major cellular mRNA deadenylases and is linked to various cellular processes including bulk mRNA degradation, miRNA-mediated repression, translational repression during translational initiation and general transcription regulation. Additional complex functions may be a consequence of its influence on mRNA expression. Is not required for association of CNOT7 to the CCR4-NOT complex. This Drosophila melanogaster (Fruit fly) protein is CCR4-NOT transcription complex subunit 10 (Not10).